Here is a 138-residue protein sequence, read N- to C-terminus: Transmembrane protein 170A (138 aa).

Residues 1–44 (MEGSEAGGGGLLQQILSLRLVPRVGNGTTYSSPLSTFPEMWYGV) lie on the Lumenal side of the membrane. Asparagine 26 carries an N-linked (GlcNAc...) asparagine glycan. Residues 45–65 (FLWALVSSLSFHVPAALLALF) traverse the membrane as a helical segment. The Cytoplasmic segment spans residues 66–79 (TLRHHKYGRFMSVS). A helical transmembrane segment spans residues 80–100 (LLLMGIVGPITAGILTSAAIA). At 101 to 110 (GVYRAAGKKM) the chain is on the lumenal side. A helical transmembrane segment spans residues 111-131 (IPFEALIFEVGQTFCVVVVSF). At 132-138 (LRILATL) the chain is on the cytoplasmic side.

It belongs to the TMEM170 family.

The protein localises to the endoplasmic reticulum membrane. It is found in the nucleus envelope. Functionally, may regulate membrane morphogenesis in the endoplasmic reticulum (ER) by promoting ER sheet formation at the expense of ER tubules. The protein is Transmembrane protein 170A (TMEM170A) of Gallus gallus (Chicken).